The chain runs to 237 residues: Lectin alpha chain (237 aa).

Mn(2+) contacts are provided by Glu-8 and Asp-10. Ca(2+) is bound by residues Asp-10, Tyr-12, Asn-14, and Asp-19. Tyr-12 serves as a coordination point for a carbohydrate. 3 residues coordinate Mn(2+): Asp-19, His-24, and Ser-34. An a carbohydrate-binding site is contributed by 99–100; that stretch reads LY. Asp-208 lines the Ca(2+) pocket. Arg-228 lines the a carbohydrate pocket.

It belongs to the leguminous lectin family. In terms of assembly, equilibrium between homodimer and homotetramer. Oligomerization is pH-dependent with homotetramers forming at pH 6.5 and above. In terms of processing, the beta and gamma chains are produced by partial proteolytic processing of the lectin alpha chain by an asparaginyl endopeptidase. Mixture of 60% alpha lectin and 40% of its beta and gamma proteolytic fragments. As to expression, seed.

It localises to the vacuole. Its subcellular location is the aleurone grain. D-mannose/D-glucose-binding lectin. Induces histamine release in mast cells from hamster and rat. Induces lymphocyte proliferation and IFNG production. This is Lectin alpha chain from Macropsychanthus bicolor (Dioclea rostrata).